The following is a 540-amino-acid chain: Cytochrome P450 27C1 (540 aa).

Heme is bound at residue Cys-486.

The protein belongs to the cytochrome P450 family. Requires heme as cofactor. Following L-thyroxine, expressed in the retinal pigment epithelium (at protein level).

It localises to the membrane. It carries out the reaction all-trans-retinol + 2 reduced [adrenodoxin] + O2 + 2 H(+) = all-trans-3,4-didehydroretinol + 2 oxidized [adrenodoxin] + 2 H2O. In terms of biological role, efficiently catalyzes the conversion of all-trans retinol (also called vitamin A1, the precursor of 11-cis retinal) to 3,4-didehydroretinol (also called vitamin A2, the precursor of 11-cis 3,4-didehydroretinal). Also acts on all-trans retinal and all-trans retinoic acid. The replacement of 11-cis retinal chromophore in photopigments with 11-cis 3,4-didehydroretinal enhances sensitivity to long-wavelength light. This may improve vision in fresh water which is often turbid. The sequence is that of Cytochrome P450 27C1 (cyp27c1) from Danio rerio (Zebrafish).